The sequence spans 278 residues: Potassium/proton antiporter CemA (278 aa).

4 helical membrane passes run 61–81 (IFLL…FDFG), 155–175 (AVKN…LMIT), 203–223 (IILF…EVII), and 238–258 (FIFL…KYWI).

Belongs to the CemA family.

The protein localises to the plastid. It is found in the chloroplast inner membrane. It catalyses the reaction K(+)(in) + H(+)(out) = K(+)(out) + H(+)(in). Functionally, contributes to K(+)/H(+) antiport activity by supporting proton efflux to control proton extrusion and homeostasis in chloroplasts in a light-dependent manner to modulate photosynthesis. Prevents excessive induction of non-photochemical quenching (NPQ) under continuous-light conditions. Indirectly promotes efficient inorganic carbon uptake into chloroplasts. In Porphyra purpurea (Red seaweed), this protein is Potassium/proton antiporter CemA.